Consider the following 320-residue polypeptide: Ubiquitin-like domain-containing CTD phosphatase 1 (320 aa).

One can recognise a Ubiquitin-like domain in the interval 6 to 77 (VVVIVKWSGK…LKPNFKLMMV (72 aa)). The 161-residue stretch at 136–296 (PREGKKLLVL…LKLSDYLRKI (161 aa)) folds into the FCP1 homology domain. Aspartate 146, aspartate 148, and aspartate 255 together coordinate Mg(2+).

The cofactor is Mg(2+).

The protein resides in the nucleus. It carries out the reaction O-phospho-L-seryl-[protein] + H2O = L-seryl-[protein] + phosphate. It catalyses the reaction O-phospho-L-threonyl-[protein] + H2O = L-threonyl-[protein] + phosphate. In terms of biological role, dephosphorylates 26S nuclear proteasomes, thereby decreasing their proteolytic activity. Recruited to the 19S regulatory particle of the 26S proteasome where it dephosphorylates 19S component Rpt1 which impairs Rpt1 ATPase activity and disrupts 26S proteasome assembly. In Drosophila melanogaster (Fruit fly), this protein is Ubiquitin-like domain-containing CTD phosphatase 1.